A 506-amino-acid chain; its full sequence is Arabinose import ATP-binding protein AraG (506 aa).

ABC transporter domains follow at residues 10–245 (LEFC…MVGR) and 253–501 (YRSR…MLGN). ATP is bound at residue 42–49 (GENGAGKS).

This sequence belongs to the ABC transporter superfamily. Arabinose importer (TC 3.A.1.2.2) family. The complex is composed of two ATP-binding proteins (AraG), two transmembrane proteins (AraH) and a solute-binding protein (AraF).

The protein resides in the cell inner membrane. The catalysed reaction is L-arabinose(out) + ATP + H2O = L-arabinose(in) + ADP + phosphate + H(+). Functionally, part of the ABC transporter complex AraFGH involved in arabinose import. Responsible for energy coupling to the transport system. The sequence is that of Arabinose import ATP-binding protein AraG from Vibrio parahaemolyticus serotype O3:K6 (strain RIMD 2210633).